Reading from the N-terminus, the 569-residue chain is Membrane protein insertase YidC (569 aa).

A run of 8 helical transmembrane segments spans residues 7–24 (VLWV…DNYN), 219–239 (GSAL…PAIY), 299–319 (LYAV…TASM), 340–360 (FELV…FWLM), 366–386 (ILGN…LAFF), 436–456 (IGGC…YWVL), 485–505 (IGTF…SMFI), and 526–546 (PIAF…YWVV).

It belongs to the OXA1/ALB3/YidC family. Type 1 subfamily. As to quaternary structure, interacts with the Sec translocase complex via SecD. Specifically interacts with transmembrane segments of nascent integral membrane proteins during membrane integration.

The protein localises to the cell inner membrane. Its function is as follows. Required for the insertion and/or proper folding and/or complex formation of integral membrane proteins into the membrane. Involved in integration of membrane proteins that insert both dependently and independently of the Sec translocase complex, as well as at least some lipoproteins. Aids folding of multispanning membrane proteins. This chain is Membrane protein insertase YidC, found in Herminiimonas arsenicoxydans.